The following is a 101-amino-acid chain: Translation initiation factor IF-1, chloroplastic (101 aa).

Positions 1–10 are enriched in polar residues; that stretch reads MNQLKKSFSP. The interval 1–35 is disordered; it reads MNQLKKSFSPTEGKKDQNNLINDPQKNKQKKQKKL. In terms of domain architecture, S1-like spans 26–101; that stretch reads KNKQKKQKKL…TKGRITYRHR (76 aa).

The protein belongs to the IF-1 family. As to quaternary structure, component of the 30S ribosomal translation pre-initiation complex which assembles on the 30S ribosome in the order IF-2 and IF-3, IF-1 and N-formylmethionyl-tRNA(fMet); mRNA recruitment can occur at any time during PIC assembly.

It localises to the plastid. It is found in the chloroplast. In terms of biological role, one of the essential components for the initiation of protein synthesis. Stabilizes the binding of IF-2 and IF-3 on the 30S subunit to which N-formylmethionyl-tRNA(fMet) subsequently binds. Helps modulate mRNA selection, yielding the 30S pre-initiation complex (PIC). Upon addition of the 50S ribosomal subunit IF-1, IF-2 and IF-3 are released leaving the mature 70S translation initiation complex. In Tetradesmus obliquus (Green alga), this protein is Translation initiation factor IF-1, chloroplastic.